The primary structure comprises 154 residues: Low molecular weight protein-tyrosine-phosphatase PtpA (154 aa).

Cys-8 functions as the Nucleophile in the catalytic mechanism. Residue Arg-14 is part of the active site. The active-site Proton donor is Asp-120.

Belongs to the low molecular weight phosphotyrosine protein phosphatase family. As to quaternary structure, interacts with host CORO1A. Post-translationally, phosphorylations at Tyr-122 and Tyr-123 are essential for phosphatase activity.

It is found in the secreted. It carries out the reaction O-phospho-L-tyrosyl-[protein] + H2O = L-tyrosyl-[protein] + phosphate. Functionally, secreted tyrosine phosphatase that plays a critical role during infection as a bacterial effector protein that counteracts host defenses. Required for intramacrophage survival. This is Low molecular weight protein-tyrosine-phosphatase PtpA (ptpA) from Staphylococcus aureus (strain MSSA476).